Here is a 272-residue protein sequence, read N- to C-terminus: tRNA pseudouridine synthase A (272 aa).

Aspartate 52 functions as the Nucleophile in the catalytic mechanism. Tyrosine 110 is a substrate binding site.

The protein belongs to the tRNA pseudouridine synthase TruA family. In terms of assembly, homodimer.

The enzyme catalyses uridine(38/39/40) in tRNA = pseudouridine(38/39/40) in tRNA. Its function is as follows. Formation of pseudouridine at positions 38, 39 and 40 in the anticodon stem and loop of transfer RNAs. The chain is tRNA pseudouridine synthase A from Cupriavidus necator (strain ATCC 17699 / DSM 428 / KCTC 22496 / NCIMB 10442 / H16 / Stanier 337) (Ralstonia eutropha).